We begin with the raw amino-acid sequence, 311 residues long: MAGPLWRAAAFIQRHRTSLLVGSCAGLFGVQISFHLFPDPIVQWLYQYWPQGQPAPLSPHLWSLFQEVLKDIGVPSGHCYKPFTAFTFQPVSAGFPRLPAGAVVGIPAIFLGGPVTNIEHSVIIHGQRVDWQSPAGTRLRDALTMSHNAQKFALAKEVVYLESGVAALQTLPAPACLAGTWAISVGAKHALGLYGGPMSLRTAFNLVAIVVGYVAYTFSKDSLTLALEGWLDRRTASLSAAYVQGGVEFYEKILSGNLALRSLLGRQGEKLYTPSGNIVPRHWFRINHLPYTTRRDSLQQMWRATVSPGRF.

The Mitochondrial matrix segment spans residues 1–17 (MAGPLWRAAAFIQRHRT). Residues 18 to 38 (SLLVGSCAGLFGVQISFHLFP) form a helical membrane-spanning segment. At 39–164 (DPIVQWLYQY…AKEVVYLESG (126 aa)) the chain is on the mitochondrial intermembrane side. The chain crosses the membrane as a helical span at residues 165–185 (VAALQTLPAPACLAGTWAISV). The Mitochondrial matrix segment spans residues 186–190 (GAKHA). The helical transmembrane segment at 191 to 211 (LGLYGGPMSLRTAFNLVAIVV) threads the bilayer. Residues 212-311 (GYVAYTFSKD…WRATVSPGRF (100 aa)) lie on the Mitochondrial intermembrane side of the membrane.

Belongs to the TMEM177 family. In terms of assembly, found in a complex with COX20, COA6, MT-CO2/COX2, COX18, SCO1 and SCO2. Interacts with COX20. Interacts with COX1, MT-CO2/COX2, SCO1 and SCO2 in a COX20-dependent manner.

It localises to the mitochondrion inner membrane. Plays a role in the early steps of cytochrome c oxidase subunit II (MT-CO2/COX2) maturation and is required for the stabilization of COX20 and the newly synthesized MT-CO2/COX2 protein. In Mus musculus (Mouse), this protein is Transmembrane protein 177 (Tmem177).